Reading from the N-terminus, the 267-residue chain is Thiamine pyrophosphokinase 1 (267 aa).

The protein belongs to the thiamine pyrophosphokinase family. As to expression, expressed in roots, leaves and flowers.

Its subcellular location is the cytoplasm. The protein resides in the cytosol. The enzyme catalyses thiamine + ATP = thiamine diphosphate + AMP + H(+). It functions in the pathway cofactor biosynthesis; thiamine diphosphate biosynthesis; thiamine diphosphate from thiamine: step 1/1. Its function is as follows. Catalyzes the phosphorylation of thiamine to thiamine pyrophosphate (TPP). TPP is an active cofactor for enzymes involved in glycolysis and energy production. Plant leaves require high levels of TPP for photosynthesis and carbohydrate metabolism. This chain is Thiamine pyrophosphokinase 1, found in Arabidopsis thaliana (Mouse-ear cress).